The following is a 398-amino-acid chain: 4-hydroxy-3-methylbut-2-enyl diphosphate reductase (398 aa).

Cys66 is a binding site for [4Fe-4S] cluster. (2E)-4-hydroxy-3-methylbut-2-enyl diphosphate is bound at residue His96. Dimethylallyl diphosphate is bound at residue His96. His96 serves as a coordination point for isopentenyl diphosphate. Cys157 contributes to the [4Fe-4S] cluster binding site. His185 is a binding site for (2E)-4-hydroxy-3-methylbut-2-enyl diphosphate. His185 is a dimethylallyl diphosphate binding site. Position 185 (His185) interacts with isopentenyl diphosphate. Glu187 serves as the catalytic Proton donor. Position 250 (Thr250) interacts with (2E)-4-hydroxy-3-methylbut-2-enyl diphosphate. Position 288 (Cys288) interacts with [4Fe-4S] cluster. Positions 317, 318, 319, and 379 each coordinate (2E)-4-hydroxy-3-methylbut-2-enyl diphosphate. Residues Ser317, Ser318, Asn319, and Ser379 each contribute to the dimethylallyl diphosphate site. Isopentenyl diphosphate-binding residues include Ser317, Ser318, Asn319, and Ser379.

The protein belongs to the IspH family. [4Fe-4S] cluster is required as a cofactor.

The enzyme catalyses isopentenyl diphosphate + 2 oxidized [2Fe-2S]-[ferredoxin] + H2O = (2E)-4-hydroxy-3-methylbut-2-enyl diphosphate + 2 reduced [2Fe-2S]-[ferredoxin] + 2 H(+). The catalysed reaction is dimethylallyl diphosphate + 2 oxidized [2Fe-2S]-[ferredoxin] + H2O = (2E)-4-hydroxy-3-methylbut-2-enyl diphosphate + 2 reduced [2Fe-2S]-[ferredoxin] + 2 H(+). Its pathway is isoprenoid biosynthesis; dimethylallyl diphosphate biosynthesis; dimethylallyl diphosphate from (2E)-4-hydroxy-3-methylbutenyl diphosphate: step 1/1. The protein operates within isoprenoid biosynthesis; isopentenyl diphosphate biosynthesis via DXP pathway; isopentenyl diphosphate from 1-deoxy-D-xylulose 5-phosphate: step 6/6. Functionally, catalyzes the conversion of 1-hydroxy-2-methyl-2-(E)-butenyl 4-diphosphate (HMBPP) into a mixture of isopentenyl diphosphate (IPP) and dimethylallyl diphosphate (DMAPP). Acts in the terminal step of the DOXP/MEP pathway for isoprenoid precursor biosynthesis. The sequence is that of 4-hydroxy-3-methylbut-2-enyl diphosphate reductase from Synechococcus sp. (strain CC9311).